Consider the following 527-residue polypeptide: Bifunctional purine biosynthesis protein PurH (527 aa).

The region spanning 8 to 156 (AGAKRPIRRA…KNHPSVAVVV (149 aa)) is the MGS-like domain.

The protein belongs to the PurH family.

It carries out the reaction (6R)-10-formyltetrahydrofolate + 5-amino-1-(5-phospho-beta-D-ribosyl)imidazole-4-carboxamide = 5-formamido-1-(5-phospho-D-ribosyl)imidazole-4-carboxamide + (6S)-5,6,7,8-tetrahydrofolate. The enzyme catalyses IMP + H2O = 5-formamido-1-(5-phospho-D-ribosyl)imidazole-4-carboxamide. It participates in purine metabolism; IMP biosynthesis via de novo pathway; 5-formamido-1-(5-phospho-D-ribosyl)imidazole-4-carboxamide from 5-amino-1-(5-phospho-D-ribosyl)imidazole-4-carboxamide (10-formyl THF route): step 1/1. Its pathway is purine metabolism; IMP biosynthesis via de novo pathway; IMP from 5-formamido-1-(5-phospho-D-ribosyl)imidazole-4-carboxamide: step 1/1. This chain is Bifunctional purine biosynthesis protein PurH, found in Mycobacterium sp. (strain JLS).